A 213-amino-acid polypeptide reads, in one-letter code: Probable nicotinate-nucleotide adenylyltransferase (213 aa).

Belongs to the NadD family.

The enzyme catalyses nicotinate beta-D-ribonucleotide + ATP + H(+) = deamido-NAD(+) + diphosphate. The protein operates within cofactor biosynthesis; NAD(+) biosynthesis; deamido-NAD(+) from nicotinate D-ribonucleotide: step 1/1. In terms of biological role, catalyzes the reversible adenylation of nicotinate mononucleotide (NaMN) to nicotinic acid adenine dinucleotide (NaAD). The chain is Probable nicotinate-nucleotide adenylyltransferase from Ruegeria pomeroyi (strain ATCC 700808 / DSM 15171 / DSS-3) (Silicibacter pomeroyi).